The following is a 391-amino-acid chain: Small ribosomal subunit protein mS29 (391 aa).

The transit peptide at 1-17 (MLTGITRLFSRVQKLDP) directs the protein to the mitochondrion. Residues 30–59 (NSQVPAERPRTVSRTSDSDPAKHGEQHEGQ) are disordered. Positions 45–59 (SDSDPAKHGEQHEGQ) are enriched in basic and acidic residues. Residues lysine 168 and lysine 200 each carry the N6-acetyllysine modification.

Belongs to the mitochondrion-specific ribosomal protein mS29 family. In terms of assembly, component of the mitochondrial ribosome small subunit (28S) which comprises a 12S rRNA and about 30 distinct proteins. Interacts with DELE1. Interacts with NOA1.

It is found in the mitochondrion. It catalyses the reaction GTP + H2O = GDP + phosphate + H(+). In terms of biological role, as a component of the mitochondrial small ribosomal subunit, it plays a role in the translation of mitochondrial mRNAs. Involved in mediating interferon-gamma-induced cell death. Displays GTPase activity in vitro. The protein is Small ribosomal subunit protein mS29 of Mus musculus (Mouse).